Here is a 60-residue protein sequence, read N- to C-terminus: DNA gyrase inhibitor YacG (60 aa).

Zn(2+) contacts are provided by cysteine 15, cysteine 18, cysteine 30, and cysteine 34.

This sequence belongs to the DNA gyrase inhibitor YacG family. In terms of assembly, interacts with GyrB. It depends on Zn(2+) as a cofactor.

Its function is as follows. Inhibits all the catalytic activities of DNA gyrase by preventing its interaction with DNA. Acts by binding directly to the C-terminal domain of GyrB, which probably disrupts DNA binding by the gyrase. The protein is DNA gyrase inhibitor YacG of Bradyrhizobium diazoefficiens (strain JCM 10833 / BCRC 13528 / IAM 13628 / NBRC 14792 / USDA 110).